Consider the following 349-residue polypeptide: Core protein VP7 (349 aa).

N-linked (GlcNAc...) asparagine; by host glycosylation is present at N287.

This sequence belongs to the orbivirus VP7 family. In terms of assembly, homotrimer that assemble in a complex of 260 capsomers on an inner scaffold composed of VP3.

It localises to the virion. Functionally, the VP7 protein is one of the five proteins (with VP1, VP3, VP4, and VP6) which form the inner capsid of the virus. In Bluetongue virus 1 (isolate Australia) (BTV 1), this protein is Core protein VP7 (Segment-7).